The sequence spans 1069 residues: Carbamoyl phosphate synthase large chain (1069 aa).

The segment at 1-401 is carboxyphosphate synthetic domain; it reads MPLNKDIKRV…AFLKGIRSLE (401 aa). R129, R169, G175, G176, K208, V210, E215, G241, I242, H243, Q284, and E298 together coordinate ATP. The ATP-grasp 1 domain occupies 133 to 327; the sequence is RDMMNRIGEP…IAKLAAKIAL (195 aa). Mg(2+) is bound by residues Q284, E298, and N300. The Mn(2+) site is built by Q284, E298, and N300. Residues 402 to 549 form an oligomerization domain region; that stretch reads IGKYSLDHKK…YSTYEQYDEV (148 aa). A carbamoyl phosphate synthetic domain region spans residues 550-932; it reads EVSNRRKVIV…ALYKGFVGAN (383 aa). The 191-residue stretch at 674 to 864 folds into the ATP-grasp 2 domain; the sequence is DELLERLDIS…IVDIATQVML (191 aa). ATP is bound by residues R710, K749, L751, E755, G780, V781, H782, S783, Q823, and E835. Q823, E835, and N837 together coordinate Mg(2+). 3 residues coordinate Mn(2+): Q823, E835, and N837. The region spanning 932 to 1069 is the MGS-like domain; it reads NMYPSKEKGK…KDLEVFDITK (138 aa). Residues 933–1069 form an allosteric domain region; that stretch reads MYPSKEKGKI…KDLEVFDITK (137 aa).

The protein belongs to the CarB family. Composed of two chains; the small (or glutamine) chain promotes the hydrolysis of glutamine to ammonia, which is used by the large (or ammonia) chain to synthesize carbamoyl phosphate. Tetramer of heterodimers (alpha,beta)4. Requires Mg(2+) as cofactor. Mn(2+) is required as a cofactor.

It catalyses the reaction hydrogencarbonate + L-glutamine + 2 ATP + H2O = carbamoyl phosphate + L-glutamate + 2 ADP + phosphate + 2 H(+). The enzyme catalyses hydrogencarbonate + NH4(+) + 2 ATP = carbamoyl phosphate + 2 ADP + phosphate + 2 H(+). It functions in the pathway amino-acid biosynthesis; L-arginine biosynthesis; carbamoyl phosphate from bicarbonate: step 1/1. The protein operates within pyrimidine metabolism; UMP biosynthesis via de novo pathway; (S)-dihydroorotate from bicarbonate: step 1/3. In terms of biological role, large subunit of the glutamine-dependent carbamoyl phosphate synthetase (CPSase). CPSase catalyzes the formation of carbamoyl phosphate from the ammonia moiety of glutamine, carbonate, and phosphate donated by ATP, constituting the first step of 2 biosynthetic pathways, one leading to arginine and/or urea and the other to pyrimidine nucleotides. The large subunit (synthetase) binds the substrates ammonia (free or transferred from glutamine from the small subunit), hydrogencarbonate and ATP and carries out an ATP-coupled ligase reaction, activating hydrogencarbonate by forming carboxy phosphate which reacts with ammonia to form carbamoyl phosphate. This is Carbamoyl phosphate synthase large chain from Clostridium botulinum (strain Alaska E43 / Type E3).